A 240-amino-acid polypeptide reads, in one-letter code: MVQHLSAQEIIQYISDAKKSTPLKVYVNGHFENVTFPESFKVFGSEHSKVIFCEANEWKQFYQQNHSLITELEIEMDRRNSAIPLKDLTNTNARIEPGAFIREQAIIEDGAVVMMGATINIGAIVGEGTMIDMNATLGGRATTGKNVHVGAGAVLAGVIEPPSASPVVIEDNVLIGANAVILEGVRVGAGAIVAAGAIVTQDVPAGAVVAGTPAKVIKQTSEVQDSKREIVSALRKLNNE.

It belongs to the transferase hexapeptide repeat family. DapH subfamily.

It catalyses the reaction (S)-2,3,4,5-tetrahydrodipicolinate + acetyl-CoA + H2O = L-2-acetamido-6-oxoheptanedioate + CoA. It participates in amino-acid biosynthesis; L-lysine biosynthesis via DAP pathway; LL-2,6-diaminopimelate from (S)-tetrahydrodipicolinate (acetylase route): step 1/3. Its function is as follows. Catalyzes the transfer of an acetyl group from acetyl-CoA to tetrahydrodipicolinate. The polypeptide is 2,3,4,5-tetrahydropyridine-2,6-dicarboxylate N-acetyltransferase (Staphylococcus epidermidis (strain ATCC 12228 / FDA PCI 1200)).